A 198-amino-acid polypeptide reads, in one-letter code: Holliday junction branch migration complex subunit RuvA (198 aa).

Residues 1–61 (MILYRIGEII…EYQYATYAFK (61 aa)) form a domain I region. Residues 62–139 (DFKERLLFVD…KMISPKDAAK (78 aa)) are domain II. Residues 140–144 (INETT) form a flexible linker region. The interval 144–198 (TNTLSEVKETLKMVGFKTKQIDGALSKISSTDDVEKMIEEAIKLMSTQNYESATA) is domain III.

It belongs to the RuvA family. As to quaternary structure, homotetramer. Forms an RuvA(8)-RuvB(12)-Holliday junction (HJ) complex. HJ DNA is sandwiched between 2 RuvA tetramers; dsDNA enters through RuvA and exits via RuvB. An RuvB hexamer assembles on each DNA strand where it exits the tetramer. Each RuvB hexamer is contacted by two RuvA subunits (via domain III) on 2 adjacent RuvB subunits; this complex drives branch migration. In the full resolvosome a probable DNA-RuvA(4)-RuvB(12)-RuvC(2) complex forms which resolves the HJ.

The protein resides in the cytoplasm. Its function is as follows. The RuvA-RuvB-RuvC complex processes Holliday junction (HJ) DNA during genetic recombination and DNA repair, while the RuvA-RuvB complex plays an important role in the rescue of blocked DNA replication forks via replication fork reversal (RFR). RuvA specifically binds to HJ cruciform DNA, conferring on it an open structure. The RuvB hexamer acts as an ATP-dependent pump, pulling dsDNA into and through the RuvAB complex. HJ branch migration allows RuvC to scan DNA until it finds its consensus sequence, where it cleaves and resolves the cruciform DNA. In Mycoplasmopsis agalactiae (strain NCTC 10123 / CIP 59.7 / PG2) (Mycoplasma agalactiae), this protein is Holliday junction branch migration complex subunit RuvA.